Reading from the N-terminus, the 204-residue chain is Ribosome maturation factor RimP (204 aa).

It belongs to the RimP family.

Its subcellular location is the cytoplasm. Functionally, required for maturation of 30S ribosomal subunits. This Albidiferax ferrireducens (strain ATCC BAA-621 / DSM 15236 / T118) (Rhodoferax ferrireducens) protein is Ribosome maturation factor RimP.